The following is a 281-amino-acid chain: Pantothenate synthetase (281 aa).

ATP is bound at residue 30–37; that stretch reads MGNLHQGH. Catalysis depends on histidine 37, which acts as the Proton donor. Glutamine 61 contacts (R)-pantoate. Residue glutamine 61 coordinates beta-alanine. 149–152 contacts ATP; the sequence is GNKD. Position 155 (glutamine 155) interacts with (R)-pantoate. ATP contacts are provided by residues isoleucine 178 and 186 to 189; that span reads MSSR.

This sequence belongs to the pantothenate synthetase family. Homodimer.

The protein localises to the cytoplasm. It catalyses the reaction (R)-pantoate + beta-alanine + ATP = (R)-pantothenate + AMP + diphosphate + H(+). It participates in cofactor biosynthesis; (R)-pantothenate biosynthesis; (R)-pantothenate from (R)-pantoate and beta-alanine: step 1/1. In terms of biological role, catalyzes the condensation of pantoate with beta-alanine in an ATP-dependent reaction via a pantoyl-adenylate intermediate. The polypeptide is Pantothenate synthetase (Shewanella baltica (strain OS223)).